The following is a 1186-amino-acid chain: DNA excision repair protein ERCC-5 (1186 aa).

The N-domain stretch occupies residues 1-78 (MGVQGLWKLL…RIRPIFVFDG (78 aa)). N6-acetyllysine is present on lysine 8. Aspartate 30 serves as a coordination point for Mg(2+). A DNA-binding; may bind to the undamaged single-strand DNA of the DNA repair bubble region spans residues 31–67 (ISIWLNQALKGVRDRHGNSIENPHLLTLFHRLCKLLF). Position 77 (aspartate 77) interacts with Mg(2+). The segment at 79 to 785 (DAPLLKKQTL…LRLFGIPYIQ (707 aa)) is spacer region. 5 disordered regions span residues 306–342 (ESLP…PPSP), 354–385 (GSSS…SISP), 404–473 (CAGD…SVPK), 510–533 (HSDA…TNSV), and 667–724 (QAEF…AEDS). The segment covering 325–336 (PCEKLKTEKEPD) has biased composition (basic and acidic residues). Residue serine 384 is modified to Phosphoserine. Basic and acidic residues predominate over residues 454-472 (AEEHVASTNEGREPTDSVP). The residue at position 705 (serine 705) is a Phosphoserine. Positions 786–881 (APMEAEAQCA…VTAMEILNEF (96 aa)) are I-domain. Mg(2+)-binding residues include glutamate 789, glutamate 791, aspartate 810, and aspartate 812. Positions 820-836 (HVYRNFFNKNKFVEYYQ) are DNA-binding; may bind to the undamaged single-strand DNA of the DNA repair bubble. Residues 848–880 (RNKLINLAYLLGSDYTEGIPTVGCVTAMEILNE) are DNA-binding; H2TH (helix-2turn-helix) motif which binds double-stranded DNA. Residue aspartate 861 participates in Mg(2+) binding. Positions 912 to 918 (TKVKKKL) are DNA-binding; may bind double-stranded DNA. Positions 981-1009 (LKQLDAQQTQLRIDSFFRLAQQEKEDAKR) are interaction with PCNA. Residues 1011–1186 (KSQRLNRAVT…RRARGRKRKT (176 aa)) are interaction with ERCC6/CSB. Disordered regions lie at residues 1056-1081 (QKRG…SKGK) and 1095-1186 (ESSD…KRKT). The Nuclear localization signal 1 motif lies at 1057–1074 (KRGITNTLEESSSLKRKR). Residues 1124–1133 (TSASDSQNSV) are compositionally biased toward polar residues. The Nuclear localization signal 2 signature appears at 1169–1186 (FGKKRRKLRRARGRKRKT). Residues 1169-1186 (FGKKRRKLRRARGRKRKT) are compositionally biased toward basic residues.

Belongs to the XPG/RAD2 endonuclease family. XPG subfamily. Monomer. Homodimer. Component of the homologous recombination repair (HR) complex composed of ERCC5/XPG, BRCA2, PALB2, DSS1 and RAD51. Within the complex, interacts with BRCA2 and PALB2. Interacts with RNA polymerase II. Interacts (via C-terminus) with ERCC6/CSB; the interaction stimulates ERCC6/CSB binding to the DNA repair bubble and ERCC6/CSB ATPase activity. May form a complex composed of RNA polymerase II, ERCC6/CSB and ERCC5/XPG which associates with the DNA repair bubble during transcription-coupled nucleotide excision repair. Interacts with BRCA1; the interaction promotes the release of BRCA1 from DNA. Interacts with PCNA. Interacts with NTHL1; the interaction stimulates NTHL1 activity and NTHL1 binding to its DNA substrate. It depends on Mg(2+) as a cofactor.

Its subcellular location is the nucleus. The protein localises to the chromosome. Its function is as follows. Single-stranded structure-specific DNA endonuclease involved in DNA excision repair. Makes the 3'incision in DNA nucleotide excision repair (NER). Binds and bends DNA repair bubble substrate and breaks base stacking at the single-strand/double-strand DNA junction of the DNA bubble. Plays a role in base excision repair (BER) by promoting the binding of DNA glycosylase NTHL1 to its substrate and increasing NTHL1 catalytic activity that removes oxidized pyrimidines from DNA. Involved in transcription-coupled nucleotide excision repair (TCR) which allows RNA polymerase II-blocking lesions to be rapidly removed from the transcribed strand of active genes. Functions during the initial step of TCR in cooperation with ERCC6/CSB to recognized stalled RNA polymerase II. Also, stimulates ERCC6/CSB binding to the DNA repair bubble and ERCC6/CSB ATPase activity. Required for DNA replication fork maintenance and preservation of genomic stability. Involved in homologous recombination repair (HRR) induced by DNA replication stress by recruiting RAD51, BRCA2, and PALB2 to the damaged DNA site. In TFIIH stimulates the 5'-3' helicase activity of XPD/ERCC2 and the DNA translocase activity of XPB/ERCC3. During HRR, binds to the replication fork with high specificity and stabilizes it. Also, acts upstream of HRR, to promote the release of BRCA1 from DNA. This Homo sapiens (Human) protein is DNA excision repair protein ERCC-5 (ERCC5).